The sequence spans 80 residues: Conotoxin SmIVA (80 aa).

An N-terminal signal peptide occupies residues Met1–Ser21. Positions Ile22–Arg38 are excised as a propeptide. Gln39 carries the post-translational modification Pyrrolidone carboxylic acid. Ser45 is a glycosylation site (O-linked (HexNAc...) serine). A 4-hydroxyproline mark is found at Pro55, Pro60, Pro70, and Pro72. Ser75 is modified (serine amide). A propeptide spanning residues Gly76–Asp80 is cleaved from the precursor.

The protein belongs to the conotoxin A superfamily. Post-translationally, contains 3 disulfide bonds. In terms of tissue distribution, expressed by the venom duct.

It localises to the secreted. Its function is as follows. Neurotoxin with probable activity on sodium channel. Induces intense repetitive firing of the frog neuromuscular junction, leading to a tetanic contracture in muscle fiber (spastic paralysis). In vivo, shows the same effect as the whole venom when injected on fish prey. The sequence is that of Conotoxin SmIVA from Conus stercusmuscarum (Fly-specked cone).